Consider the following 671-residue polypeptide: DNA ligase (671 aa).

NAD(+) is bound by residues 32 to 36 (DAEYD), 81 to 82 (SL), and Glu113. The active-site N6-AMP-lysine intermediate is the Lys115. NAD(+) contacts are provided by Arg136, Glu173, Lys290, and Lys314. Residues Cys408, Cys411, Cys426, and Cys432 each coordinate Zn(2+). The BRCT domain occupies 593 to 671 (EIDSPFAGKT…ETEMLRLLGS (79 aa)).

This sequence belongs to the NAD-dependent DNA ligase family. LigA subfamily. Requires Mg(2+) as cofactor. Mn(2+) serves as cofactor.

It catalyses the reaction NAD(+) + (deoxyribonucleotide)n-3'-hydroxyl + 5'-phospho-(deoxyribonucleotide)m = (deoxyribonucleotide)n+m + AMP + beta-nicotinamide D-nucleotide.. In terms of biological role, DNA ligase that catalyzes the formation of phosphodiester linkages between 5'-phosphoryl and 3'-hydroxyl groups in double-stranded DNA using NAD as a coenzyme and as the energy source for the reaction. It is essential for DNA replication and repair of damaged DNA. The sequence is that of DNA ligase from Escherichia coli O127:H6 (strain E2348/69 / EPEC).